The primary structure comprises 138 residues: Acidic phospholipase A2 jerdoxin (138 aa).

Residues 1-16 form the signal peptide; the sequence is MRTLWIMAVLLVGVEG. 7 cysteine pairs are disulfide-bonded: cysteine 42-cysteine 131, cysteine 44-cysteine 60, cysteine 59-cysteine 111, cysteine 65-cysteine 138, cysteine 66-cysteine 104, cysteine 73-cysteine 97, and cysteine 91-cysteine 102. The Ca(2+) site is built by tyrosine 43, glycine 45, and glycine 47. Histidine 63 is an active-site residue. Aspartate 64 contributes to the Ca(2+) binding site. The active site involves aspartate 105.

This sequence belongs to the phospholipase A2 family. Group II subfamily. D49 sub-subfamily. In terms of assembly, monomer. Ca(2+) is required as a cofactor. Expressed by the venom gland.

Its subcellular location is the secreted. The catalysed reaction is a 1,2-diacyl-sn-glycero-3-phosphocholine + H2O = a 1-acyl-sn-glycero-3-phosphocholine + a fatty acid + H(+). Snake venom phospholipase A2 (PLA2) that displays edema-inducing activities, exhibits indirect hemolytic activity, and inhibits ADP-induced platelet aggregation. PLA2 catalyzes the calcium-dependent hydrolysis of the 2-acyl groups in 3-sn-phosphoglycerides. In Protobothrops jerdonii (Jerdon's pitviper), this protein is Acidic phospholipase A2 jerdoxin.